We begin with the raw amino-acid sequence, 398 residues long: Tyrosine--tRNA ligase (398 aa).

The 'HIGH' region signature appears at 48–57 (PTGADIHLGH). A 'KMSKS' region motif is present at residues 235 to 239 (KMSKS). Lysine 238 contacts ATP. Positions 334–398 (VKLAYLLGAT…GKNKFMRLVP (65 aa)) constitute an S4 RNA-binding domain.

It belongs to the class-I aminoacyl-tRNA synthetase family. TyrS type 2 subfamily. In terms of assembly, homodimer.

The protein resides in the cytoplasm. It catalyses the reaction tRNA(Tyr) + L-tyrosine + ATP = L-tyrosyl-tRNA(Tyr) + AMP + diphosphate + H(+). Functionally, catalyzes the attachment of tyrosine to tRNA(Tyr) in a two-step reaction: tyrosine is first activated by ATP to form Tyr-AMP and then transferred to the acceptor end of tRNA(Tyr). This chain is Tyrosine--tRNA ligase, found in Nostoc sp. (strain PCC 7120 / SAG 25.82 / UTEX 2576).